We begin with the raw amino-acid sequence, 444 residues long: Methylenetetrahydrofolate--tRNA-(uracil-5-)-methyltransferase TrmFO (444 aa).

An FAD-binding site is contributed by 10-15 (GAGLAG).

This sequence belongs to the MnmG family. TrmFO subfamily. It depends on FAD as a cofactor.

It localises to the cytoplasm. It carries out the reaction uridine(54) in tRNA + (6R)-5,10-methylene-5,6,7,8-tetrahydrofolate + NADH + H(+) = 5-methyluridine(54) in tRNA + (6S)-5,6,7,8-tetrahydrofolate + NAD(+). It catalyses the reaction uridine(54) in tRNA + (6R)-5,10-methylene-5,6,7,8-tetrahydrofolate + NADPH + H(+) = 5-methyluridine(54) in tRNA + (6S)-5,6,7,8-tetrahydrofolate + NADP(+). In terms of biological role, catalyzes the folate-dependent formation of 5-methyl-uridine at position 54 (M-5-U54) in all tRNAs. This is Methylenetetrahydrofolate--tRNA-(uracil-5-)-methyltransferase TrmFO from Streptococcus agalactiae serotype Ia (strain ATCC 27591 / A909 / CDC SS700).